We begin with the raw amino-acid sequence, 291 residues long: Nucleotide-binding protein lmo2474 (291 aa).

ATP is bound at residue 13-20; sequence GMSGAGKT. 63 to 66 contacts GTP; that stretch reads DLRG.

The protein belongs to the RapZ-like family.

Functionally, displays ATPase and GTPase activities. This is Nucleotide-binding protein lmo2474 from Listeria monocytogenes serovar 1/2a (strain ATCC BAA-679 / EGD-e).